Here is a 367-residue protein sequence, read N- to C-terminus: MFDVFGSVKGLLKIDQVCIDNNVFRMHYKATVIILIAFSLLVTSRQYIGDPIDCIVDEIPLGVMDTYCWIYSTFTVPERLTGITGRDVVQPGVGSHVEGEDEVKYHKYYQWVCFVLFFQAILFYVPRYLWKSWEGGRLKMLVMDLNSPIVNDECKNDRKKILVDYFIGNLNRHNFYAFRFFVCEALNFVNVIGQIYFVDFFLDGEFSTYGSDVLKFTELEPDERIDPMARVFPKVTKCTFHKYGPSGSVQTHDGLCVLPLNIVNEKIYVFLWFWFIILSIMSGISLIYRIAVVAGPKLRHLLLRARSRLAESEEVELVANKCNIGDWFLLYQLGKNIDPLIYKEVISDLSREMSGDEHSAHKRPFDA.

Topologically, residues 1–22 (MFDVFGSVKGLLKIDQVCIDNN) are cytoplasmic. A helical transmembrane segment spans residues 23–43 (VFRMHYKATVIILIAFSLLVT). Topologically, residues 44-109 (SRQYIGDPID…EDEVKYHKYY (66 aa)) are extracellular. Residues 110-130 (QWVCFVLFFQAILFYVPRYLW) traverse the membrane as a helical segment. Positions 130-179 (WKSWEGGRLKMLVMDLNSPIVNDECKNDRKKILVDYFIGNLNRHNFYAFR) are interaction with shg. At 131–179 (KSWEGGRLKMLVMDLNSPIVNDECKNDRKKILVDYFIGNLNRHNFYAFR) the chain is on the cytoplasmic side. The helical transmembrane segment at 180 to 200 (FFVCEALNFVNVIGQIYFVDF) threads the bilayer. At 201 to 266 (FLDGEFSTYG…VLPLNIVNEK (66 aa)) the chain is on the extracellular side. A helical membrane pass occupies residues 267–287 (IYVFLWFWFIILSIMSGISLI). Residues 288-367 (YRIAVVAGPK…HSAHKRPFDA (80 aa)) are Cytoplasmic-facing.

The protein belongs to the pannexin family. Monomer and heterooligomer with ogre or Inx3 (via cytoplasmic C-terminal region). Interacts (via cytoplasmic loop) with shg (via cytoplasmic region). Interacts with arm. In terms of tissue distribution, in ovary, expressed in inner germarial sheath cells, prefollicular cells, follicle cells, nurse cells and oocytes. Expressed in embryonic epithelial cells. Expressed in foregut and hindgut from stage 11-17, segmentally repeated tracheal placodes at stage 14, salivary gland at stage 16 and proventriculus at stage 16-17 (at protein level). During germband extension stage (stage 7), expressed in epidermal epithelial cells. Expressed in cephalic furrow. Repeating epidermal pattern emerges at stage 11, refines to one or two cells at each side of the segment borders by stage 13. Expressed in the imaginal wing disk. In pupae, expressed in the CNS and in primary, secondary and tertiary pigment cells of the retina. Expressed in optic lamina of the adult CNS.

Its subcellular location is the cell membrane. The protein resides in the cell junction. The protein localises to the gap junction. It localises to the cytoplasm. It is found in the apical cell membrane. Its subcellular location is the apicolateral cell membrane. The protein resides in the basolateral cell membrane. The protein localises to the lateral cell membrane. In terms of biological role, structural components of the gap junctions. Involved in gap junctional communication between germline and somatic cells which is essential for normal oogenesis. In embryonic epidermis, required for epithelial morphogenesis. Required for keyhole formation during early stages of proventriculus development in response to wg signaling. In follicle cells, promotes the formation of egg chambers in part through regulation of shg and baz at the boundary between germ cells and follicle cells. In inner germarial sheath cells, required for survival of early germ cells and for cyst formation. The chain is Innexin inx2 (Inx2) from Drosophila melanogaster (Fruit fly).